The chain runs to 467 residues: UDP-glycosyltransferase 71D2 (467 aa).

Residues Ser-283, 339–341 (SPQ), 356–364 (HCGWNSIVE), and 378–381 (YAEQ) each bind UDP-alpha-D-glucose.

It belongs to the UDP-glycosyltransferase family.

The chain is UDP-glycosyltransferase 71D2 (UGT71D2) from Arabidopsis thaliana (Mouse-ear cress).